The following is a 399-amino-acid chain: 1-deoxy-D-xylulose 5-phosphate reductoisomerase (399 aa).

Residues threonine 13, glycine 14, serine 15, isoleucine 16, and asparagine 127 each coordinate NADPH. A 1-deoxy-D-xylulose 5-phosphate-binding site is contributed by lysine 128. Glutamate 129 is a binding site for NADPH. Residue aspartate 153 coordinates Mn(2+). Residues serine 154, glutamate 155, serine 187, and histidine 210 each coordinate 1-deoxy-D-xylulose 5-phosphate. Residue glutamate 155 coordinates Mn(2+). Glycine 216 provides a ligand contact to NADPH. 4 residues coordinate 1-deoxy-D-xylulose 5-phosphate: serine 223, asparagine 228, lysine 229, and glutamate 232. Glutamate 232 serves as a coordination point for Mn(2+).

This sequence belongs to the DXR family. Mg(2+) serves as cofactor. Requires Mn(2+) as cofactor.

The enzyme catalyses 2-C-methyl-D-erythritol 4-phosphate + NADP(+) = 1-deoxy-D-xylulose 5-phosphate + NADPH + H(+). It participates in isoprenoid biosynthesis; isopentenyl diphosphate biosynthesis via DXP pathway; isopentenyl diphosphate from 1-deoxy-D-xylulose 5-phosphate: step 1/6. Its function is as follows. Catalyzes the NADPH-dependent rearrangement and reduction of 1-deoxy-D-xylulose-5-phosphate (DXP) to 2-C-methyl-D-erythritol 4-phosphate (MEP). The polypeptide is 1-deoxy-D-xylulose 5-phosphate reductoisomerase (Bordetella pertussis (strain Tohama I / ATCC BAA-589 / NCTC 13251)).